Reading from the N-terminus, the 314-residue chain is TPR repeat-containing protein MJ1345 (314 aa).

TPR repeat units lie at residues 12-45 (ESIL…RESP), 46-78 (DVYV…KPKY), 80-112 (LANF…EKSD), 114-146 (PVKY…YPKS), 147-180 (AIAW…NPKD), 182-214 (QSLL…NNKD), 215-248 (IRAL…NPDD), 249-282 (PLLY…NPNI), and 284-313 (DAWN…LDIY).

The sequence is that of TPR repeat-containing protein MJ1345 from Methanocaldococcus jannaschii (strain ATCC 43067 / DSM 2661 / JAL-1 / JCM 10045 / NBRC 100440) (Methanococcus jannaschii).